Reading from the N-terminus, the 546-residue chain is Methionine--tRNA ligase (546 aa).

The 'HIGH' region signature appears at 15 to 25 (PYANGPIHLGH). Positions 146, 149, 159, and 162 each coordinate Zn(2+). A 'KMSKS' region motif is present at residues 332-336 (KMSKS). Lys335 is an ATP binding site.

The protein belongs to the class-I aminoacyl-tRNA synthetase family. MetG type 1 subfamily. Monomer. Zn(2+) is required as a cofactor.

Its subcellular location is the cytoplasm. It carries out the reaction tRNA(Met) + L-methionine + ATP = L-methionyl-tRNA(Met) + AMP + diphosphate. In terms of biological role, is required not only for elongation of protein synthesis but also for the initiation of all mRNA translation through initiator tRNA(fMet) aminoacylation. The chain is Methionine--tRNA ligase from Coxiella burnetii (strain Dugway 5J108-111).